Consider the following 117-residue polypeptide: Transcription elongation factor A protein-like 8 (117 aa).

Composition is skewed to basic and acidic residues over residues 1–10 (MQKSCEENEG) and 61–75 (FKEDTPVRHLDPEEM). Residues 1-75 (MQKSCEENEG…PVRHLDPEEM (75 aa)) form a disordered region. Residues 73–100 (EEMIRGVDELERLREEIRRVRNKFVMMH) adopt a coiled-coil conformation.

Belongs to the TFS-II family. TFA subfamily.

Its subcellular location is the nucleus. In terms of biological role, may be involved in transcriptional regulation. This Homo sapiens (Human) protein is Transcription elongation factor A protein-like 8 (TCEAL8).